Consider the following 332-residue polypeptide: Ribosomal RNA small subunit methyltransferase H (332 aa).

S-adenosyl-L-methionine-binding positions include 39 to 41 (GGY), aspartate 56, phenylalanine 83, aspartate 100, and glutamine 107.

This sequence belongs to the methyltransferase superfamily. RsmH family.

The protein resides in the cytoplasm. The catalysed reaction is cytidine(1402) in 16S rRNA + S-adenosyl-L-methionine = N(4)-methylcytidine(1402) in 16S rRNA + S-adenosyl-L-homocysteine + H(+). Specifically methylates the N4 position of cytidine in position 1402 (C1402) of 16S rRNA. In Bartonella quintana (strain Toulouse) (Rochalimaea quintana), this protein is Ribosomal RNA small subunit methyltransferase H.